The chain runs to 134 residues: Small ribosomal subunit protein uS8c (134 aa).

The protein belongs to the universal ribosomal protein uS8 family. As to quaternary structure, part of the 30S ribosomal subunit.

The protein localises to the plastid. It is found in the chloroplast. Its function is as follows. One of the primary rRNA binding proteins, it binds directly to 16S rRNA central domain where it helps coordinate assembly of the platform of the 30S subunit. This is Small ribosomal subunit protein uS8c (rps8) from Lepidium virginicum (Virginia pepperweed).